A 449-amino-acid polypeptide reads, in one-letter code: Hyaluronidase-3 (449 aa).

The signal sequence occupies residues 1-23 (MYHIWIKFLAAWIFLKKFNGVHV). 2 disulfide bridges follow: Cys47/Cys340 and Cys211/Cys227. Asn67, Asn103, and Asn111 each carry an N-linked (GlcNAc...) asparagine glycan. Glu135 acts as the Proton donor in catalysis. Asn153 carries N-linked (GlcNAc...) asparagine glycosylation. An N-linked (GlcNAc...) asparagine glycan is attached at Asn357. 3 disulfide bridges follow: Cys365-Cys376, Cys370-Cys427, and Cys429-Cys438. A glycan (N-linked (GlcNAc...) asparagine) is linked at Asn401. In terms of domain architecture, EGF-like spans 427-438 (CQCYQGWKGLYC).

Belongs to the glycosyl hydrolase 56 family. In terms of assembly, monomer. In terms of tissue distribution, expressed by the venom gland.

It localises to the secreted. It catalyses the reaction Random hydrolysis of (1-&gt;4)-linkages between N-acetyl-beta-D-glucosamine and D-glucuronate residues in hyaluronate.. In terms of biological role, snake venom endo-hyaluronidase that degrades hyaluronan to smaller oligosaccharide fragments. In venom, it is not toxic by itself, but increases the diffusion of other venom proteins by degrading the extracellular matrix. In addition, it displays antiedematogenic activity. The sequence is that of Hyaluronidase-3 from Cerastes cerastes (Horned desert viper).